Reading from the N-terminus, the 807-residue chain is Glycerol-3-phosphate acyltransferase (807 aa).

The HXXXXD motif motif lies at 305 to 310 (CHRSHM).

It belongs to the GPAT/DAPAT family.

Its subcellular location is the cell inner membrane. It carries out the reaction sn-glycerol 3-phosphate + an acyl-CoA = a 1-acyl-sn-glycero-3-phosphate + CoA. The protein operates within phospholipid metabolism; CDP-diacylglycerol biosynthesis; CDP-diacylglycerol from sn-glycerol 3-phosphate: step 1/3. The chain is Glycerol-3-phosphate acyltransferase from Aliivibrio fischeri (strain ATCC 700601 / ES114) (Vibrio fischeri).